The chain runs to 5084 residues: Apicidin F synthase (5084 aa).

The tract at residues 209–606 (ARILQRQPDK…VGRLDSQVKL (398 aa)) is adenylation 1. In terms of domain architecture, Carrier 1 spans 731–808 (HETDNCQRLL…EAASSMREVV (78 aa)). Position 768 is an O-(pantetheine 4'-phosphoryl)serine (Ser768). Condensation regions lie at residues 822 to 1124 (YPLS…FPIY) and 1309 to 1609 (EIYC…SILV). The segment at 1788 to 2192 (EDPTREAVFS…IGRKDNQIKI (405 aa)) is adenylation 2. The Carrier 2 domain maps to 2341-2415 (VVKDDPVSEL…DMAKGMAPLS (75 aa)). Ser2376 carries the post-translational modification O-(pantetheine 4'-phosphoryl)serine. A disordered region spans residues 2415–2441 (SLTAPESTSSSSPQSFSTSTSTTIIEN). The segment covering 2421-2437 (STSSSSPQSFSTSTSTT) has biased composition (low complexity). The tract at residues 2478–2755 (EDIFPCTPMQ…IVTLPRQLNI (278 aa)) is condensation 3. Positions 2935–3328 (RNNPRARAVV…GRRDGQIKLR (394 aa)) are adenylation 3. Residues 3463 to 3539 (ETWSSSEAIV…DMASRLSRPE (77 aa)) form the Carrier 3 domain. Ser3500 carries the O-(pantetheine 4'-phosphoryl)serine modification. The tract at residues 3581–3866 (EDIYPCTPLQ…IATVPSRTTI (286 aa)) is condensation 4. Residues 4029–4426 (RKQVELSPSH…TVSWIGRKDH (398 aa)) are adenylation 4. The Carrier 4 domain occupies 4554 to 4631 (ALKTPKERLL…DMADLLGPLR (78 aa)). An O-(pantetheine 4'-phosphoryl)serine modification is found at Ser4592. Positions 4669–4948 (EQIYPCTAYQ…ISKLPLRIQL (280 aa)) are condensation 5.

This sequence belongs to the NRP synthetase family.

The protein operates within secondary metabolite biosynthesis. Non-ribosomal peptide synthetase; part of the gene cluster that mediates the biosynthesis of the cyclic tetrapeptide apicidin F (APF). The non-ribosomal peptide synthetase apf1 incorporates four different amino acids to produce apicidin F: L-phenylalanine, D-pipecolic acid (D-pip), N-methoxy-L-tryptophan and L-2-aminooctanedioic acid. L-Phenylalanine is the only proteinogenic amino acid directly used by apf1. The 3 other apf1 substrates are non-proteinogenic and have to be modified by other enzymes of the cluster. Lysine is converted to delta-1-pyrroline-5-carboxylate (P5C) which is reduced to L-pipecolic acid (L-pip) by apf3. L-pip is epimerized to D-pip, probably by apf1 activity, prior to incorporation. L-Tryptophan is N-oxidyzed by one of the cytochrome P450 monooxygenases (apf7 or apf8), and further methylated at the hydroxy group by the O-methyltransferase apf6 to yield N-methoxy-L-tryptophan. The synthesis of the fourth apf1 substrate is more complex. The fatty acid synthase apf5 is involved in the synthesis of the octanoic acid backbone of L-2-aminooctanedioic acid by fixing one acetyl-CoA unit and three malonyl-CoA units. Then one of the cytochrome P450 monooxygenases (apf7 or apf8) may oxidize this backbone to 2-oxooctanoic acid. The aminotransferase apf4 is predicted to catalyze the exchange of the keto group with an amino group. The next step would be the oxidation of 2-aminooctanoic acid by one of the cytochrome P450 monooxygenases (apf7 or apf8). The last step is the oxidation of 2-amino-8-hydroxyoctanoic acid to 2-aminooctanedioic acid is catalyzed by the FAD-dependent monooxygenase apf9. The sequence is that of Apicidin F synthase from Gibberella fujikuroi (strain CBS 195.34 / IMI 58289 / NRRL A-6831) (Bakanae and foot rot disease fungus).